Here is a 278-residue protein sequence, read N- to C-terminus: Sulfate transport system permease protein CysT (278 aa).

The next 7 helical transmembrane spans lie at 22 to 42, 67 to 87, 102 to 122, 139 to 159, 188 to 208, 217 to 237, and 246 to 266; these read FTWV…FLKS, FGLS…IAWV, FIDL…ATVY, IAFT…PFVV, FWRV…AQGF, SVVI…VLIF, and AGAT…LFVI. One can recognise an ABC transmembrane type-1 domain in the interval 63–266; that stretch reads YEVTFGLSLA…LFSLVILFVI (204 aa).

Belongs to the binding-protein-dependent transport system permease family. CysTW subfamily. The complex is composed of two ATP-binding proteins (CysA), two transmembrane proteins (CysT and CysW) and a solute-binding protein (CysP).

It localises to the cell inner membrane. Its function is as follows. Part of the ABC transporter complex CysAWTP (TC 3.A.1.6.1) involved in sulfate/thiosulfate import. Probably responsible for the translocation of the substrate across the membrane. The chain is Sulfate transport system permease protein CysT (cysT) from Synechococcus elongatus (strain ATCC 33912 / PCC 7942 / FACHB-805) (Anacystis nidulans R2).